A 277-amino-acid polypeptide reads, in one-letter code: Large ribosomal subunit protein uL2 (277 aa).

The interval 212-277 (RWRGKRPHVR…KFIVRGRKSK (66 aa)) is disordered. Positions 254-277 (TAGKKTRDKKKASTKFIVRGRKSK) are enriched in basic residues.

The protein belongs to the universal ribosomal protein uL2 family. In terms of assembly, part of the 50S ribosomal subunit. Forms a bridge to the 30S subunit in the 70S ribosome.

Functionally, one of the primary rRNA binding proteins. Required for association of the 30S and 50S subunits to form the 70S ribosome, for tRNA binding and peptide bond formation. It has been suggested to have peptidyltransferase activity; this is somewhat controversial. Makes several contacts with the 16S rRNA in the 70S ribosome. The chain is Large ribosomal subunit protein uL2 from Leuconostoc mesenteroides subsp. mesenteroides (strain ATCC 8293 / DSM 20343 / BCRC 11652 / CCM 1803 / JCM 6124 / NCDO 523 / NBRC 100496 / NCIMB 8023 / NCTC 12954 / NRRL B-1118 / 37Y).